The following is a 421-amino-acid chain: MKLLVVGSGGREHAIAKKLLASKGVDQVFVAPGNDGMTLDGLDLVNIVVSEHSRLIAFAKENEISWAFIGPDDALAAGIVDDFNSAGLRAFGPTKAAAELEWSKDFAKEIMVKYNVPTAAYGTFSDFEKAKAYIEEQGAPIVVKADGLALGKGVVVAETVEQAVEAAQEMLLDNKFGDSGARVVIEEFLDGEEFSLFAFANGDKFYIMPTAQDHKRAFDGDKGPNTGGMGAYAPVPHLPQSVVDTAVEMIVRPVLEGMVAEGRPYLGVLYVGLILTADGPKVIEFNSRFGDPETQIILPRLTSDFAQNIDDIMMGIEPYITWQKDGVTLGVVVASEGYPFDYEKGVPLPEKTDGDIITYYAGVKFSENSELLLSNGGRVYMLVTTEDSVKAGQDKIYTQLAQQDTTGLFYRNDIGSKAIRE.

Residues 108-314 enclose the ATP-grasp domain; sequence KEIMVKYNVP…FAQNIDDIMM (207 aa). 134 to 195 serves as a coordination point for ATP; sequence IEEQGAPIVV…EEFLDGEEFS (62 aa). Residues Glu284 and Asn286 each coordinate Mg(2+).

It belongs to the GARS family. Mg(2+) is required as a cofactor. It depends on Mn(2+) as a cofactor.

The catalysed reaction is 5-phospho-beta-D-ribosylamine + glycine + ATP = N(1)-(5-phospho-beta-D-ribosyl)glycinamide + ADP + phosphate + H(+). It functions in the pathway purine metabolism; IMP biosynthesis via de novo pathway; N(1)-(5-phospho-D-ribosyl)glycinamide from 5-phospho-alpha-D-ribose 1-diphosphate: step 2/2. The chain is Phosphoribosylamine--glycine ligase from Streptococcus pyogenes serotype M1.